The chain runs to 487 residues: Pentatricopeptide repeat-containing protein At5g61370, mitochondrial (487 aa).

A mitochondrion-targeting transit peptide spans 1–90 (MMSTTVRLNR…TSPRRLLRFF (90 aa)). PPR repeat units follow at residues 137-171 (DKQT…SCPQ), 172-202 (DGFT…HKDV), 207-241 (ELSV…GITP), 242-283 (DLFC…KIQP), 284-318 (TSMS…GCDP), 319-353 (DTGS…GFRP), 354-388 (ERKF…SVGG), and 389-423 (YGQV…DVTL). The disordered stretch occupies residues 466 to 487 (TKPKLKLKPKRRSKTKKKNLQH).

Belongs to the PPR family. P subfamily.

It localises to the mitochondrion. This chain is Pentatricopeptide repeat-containing protein At5g61370, mitochondrial, found in Arabidopsis thaliana (Mouse-ear cress).